Here is a 323-residue protein sequence, read N- to C-terminus: V-type ATP synthase subunit C (323 aa).

It belongs to the V-ATPase V0D/AC39 subunit family.

Functionally, produces ATP from ADP in the presence of a proton gradient across the membrane. The protein is V-type ATP synthase subunit C (atpC) of Thermus thermophilus (strain ATCC 27634 / DSM 579 / HB8).